A 296-amino-acid polypeptide reads, in one-letter code: Ribose import binding protein RbsB (296 aa).

The signal sequence occupies residues Met-1–Ala-25.

The protein belongs to the bacterial solute-binding protein 2 family. In terms of assembly, the complex is composed of an ATP-binding protein (RbsA), two transmembrane proteins (RbsC) and a solute-binding protein (RbsB).

The protein resides in the periplasm. Its function is as follows. Part of the ABC transporter complex RbsABC involved in ribose import. Binds ribose. Also serves as the primary chemoreceptor for chemotaxis. This is Ribose import binding protein RbsB from Escherichia coli (strain K12).